The primary structure comprises 515 residues: MGVTVQDICFAFLQNYYERMRTDPSKLAYFYASTAELTHTNYQSKSTNEKDDVLPTVKVTGRENINKFFSRNDAKVRSLKLKLDTIDFQYTGHLHKSILIMATGEMFWTGTPVYKFCQTFILLPSSNGSTFDITNDIIRFISNSFKPYVLTDASLSQSNEENSVSAVEEDKIRHESGVEKEKEKEKSPEISKPKAKKETVKDTTAPTESSTQEKPIVDHSQPRAIPVTKESKIHTETVPSSTKGNHKQDEVSTEELGNVTKLNEKSHKAEKKAAPIKTKEGSVEAINAVNNSSLPNGKEVSDEKPVPGGVKEAETEIKPIEPQVSDAKESGNNASTPSSSPEPVANPPKMTWASKLMNENSDRISKNNTTVEYIRPETLPKKPTERKFEMGNRRDNASANSKNKKKPVFSTVNKDGFYPIYIRGTNGLREEKLRSALEKEFGKVMRITAADNFAVVDFETQKSQIDALEKKKKSIDGIEVCLERKTVKKPTSNNPPGIFTNGTRSHRKQPLKRKD.

Residues 8-140 form the NTF2 domain; it reads ICFAFLQNYY…FDITNDIIRF (133 aa). The segment covering 157–166 has biased composition (low complexity); it reads QSNEENSVSA. Disordered stretches follow at residues 157–410 and 485–515; these read QSNE…PVFS and KTVKKPTSNNPPGIFTNGTRSHRKQPLKRKD. A compositionally biased stretch (basic and acidic residues) spans 168–201; sequence EEDKIRHESGVEKEKEKEKSPEISKPKAKKETVK. At S187 the chain carries Phosphoserine. The span at 202–213 shows a compositional bias: polar residues; that stretch reads DTTAPTESSTQE. 2 stretches are compositionally biased toward basic and acidic residues: residues 262–282 and 299–319; these read LNEKSHKAEKKAAPIKTKEGS and EVSDEKPVPGGVKEAETEIKP. S282 carries the post-translational modification Phosphoserine. Residues 330-341 show a composition bias toward polar residues; that stretch reads SGNNASTPSSSP. T336 is modified (phosphothreonine). S340 is subject to Phosphoserine. A compositionally biased stretch (basic and acidic residues) spans 374-396; the sequence is IRPETLPKKPTERKFEMGNRRDN. S398 is subject to Phosphoserine. Residues 418 to 494 enclose the RRM domain; sequence YPIYIRGTNG…KTVKKPTSNN (77 aa). Over residues 489 to 503 the composition is skewed to polar residues; the sequence is KPTSNNPPGIFTNGT. Over residues 504-515 the composition is skewed to basic residues; that stretch reads RSHRKQPLKRKD.

Heterotetramer with UBP3; contains two molecules of BRE5 and two molecules of UBP3. Forms a complex composed of CDC48, DOA1, deubiquitinase UBP3 and probably BRE5. Within the complex, interacts (via C-terminus) with CDC48; the interaction is direct and UBP3-independent.

In terms of biological role, has a role in de-ubiquitination. In conjunction with UBP3, cleaves ubiquitin, leading to the subsequent mono-ubiquitination of sec23. The chain is UBP3-associated protein BRE5 (BRE5) from Saccharomyces cerevisiae (strain ATCC 204508 / S288c) (Baker's yeast).